The chain runs to 47 residues: Cytochrome b559 subunit beta (47 aa).

Residues tryptophan 23–alanine 39 traverse the membrane as a helical segment. Residue histidine 27 coordinates heme.

It belongs to the PsbE/PsbF family. As to quaternary structure, heterodimer of an alpha subunit and a beta subunit. PSII is composed of 1 copy each of membrane proteins PsbA, PsbB, PsbC, PsbD, PsbE, PsbF, PsbH, PsbI, PsbJ, PsbK, PsbL, PsbM, PsbT, PsbX, PsbY, Psb30/Ycf12, peripheral proteins PsbO, CyanoQ (PsbQ), PsbU, PsbV and a large number of cofactors. It forms dimeric complexes. It depends on heme b as a cofactor.

It is found in the cellular thylakoid membrane. Functionally, this b-type cytochrome is tightly associated with the reaction center of photosystem II (PSII). PSII is a light-driven water:plastoquinone oxidoreductase that uses light energy to abstract electrons from H(2)O, generating O(2) and a proton gradient subsequently used for ATP formation. It consists of a core antenna complex that captures photons, and an electron transfer chain that converts photonic excitation into a charge separation. The polypeptide is Cytochrome b559 subunit beta (Prochlorococcus marinus subsp. pastoris (strain CCMP1986 / NIES-2087 / MED4)).